The sequence spans 880 residues: Valine--tRNA ligase (880 aa).

The 'HIGH' region signature appears at 48–58; sequence PNVTGKLHLGH. Positions 524 to 528 match the 'KMSKS' region motif; it reads KMSKS. Lysine 527 contributes to the ATP binding site. Positions 808–879 form a coiled coil; that stretch reads LAGLINIEEE…VKERIAQLRS (72 aa).

The protein belongs to the class-I aminoacyl-tRNA synthetase family. ValS type 1 subfamily. As to quaternary structure, monomer.

It is found in the cytoplasm. It catalyses the reaction tRNA(Val) + L-valine + ATP = L-valyl-tRNA(Val) + AMP + diphosphate. Its function is as follows. Catalyzes the attachment of valine to tRNA(Val). As ValRS can inadvertently accommodate and process structurally similar amino acids such as threonine, to avoid such errors, it has a 'posttransfer' editing activity that hydrolyzes mischarged Thr-tRNA(Val) in a tRNA-dependent manner. The sequence is that of Valine--tRNA ligase from Enterococcus faecalis (strain ATCC 700802 / V583).